The primary structure comprises 209 residues: 2-phospho-L-lactate guanylyltransferase (209 aa).

This sequence belongs to the CofC family. Homodimer.

The catalysed reaction is (2S)-2-phospholactate + GTP + H(+) = (2S)-lactyl-2-diphospho-5'-guanosine + diphosphate. It participates in cofactor biosynthesis; coenzyme F420 biosynthesis. In terms of biological role, guanylyltransferase that catalyzes the activation of (2S)-2-phospholactate (2-PL) as (2S)-lactyl-2-diphospho-5'-guanosine, via the condensation of 2-PL with GTP. It is involved in the biosynthesis of coenzyme F420, a hydride carrier cofactor. This is 2-phospho-L-lactate guanylyltransferase from Halobacterium salinarum (strain ATCC 29341 / DSM 671 / R1).